Reading from the N-terminus, the 565-residue chain is Protein unc-87 (565 aa).

A compositionally biased stretch (low complexity) spans 1–27 (MLSFNNTTSASSFQSASSRYLMSSSSS). Disordered regions lie at residues 1–83 (MLSF…TTNS) and 237–262 (IPSQ…RNTN). Over residues 54–69 (EALERLRPNTASRERN) the composition is skewed to basic and acidic residues. 3 Calponin-like repeats span residues 237–262 (IPSQ…RNTN), 285–310 (VRLQ…RDVC), and 338–363 (VRLQ…RRET). Polar residues predominate over residues 250–262 (KLMTNFGTPRNTN). Residues 369 to 381 (SKHPEYDHEKPDQ) show a composition bias toward basic and acidic residues. The segment at 369-400 (SKHPEYDHEKPDQSEIPLQSGTNKFASQKGMT) is disordered. Polar residues predominate over residues 384-398 (IPLQSGTNKFASQKG). 4 Calponin-like repeats span residues 384 to 409 (IPLQ…RRET), 431 to 456 (IPSQ…RWEV), 472 to 497 (VRLQ…RNTT), and 517 to 542 (IPSQ…RDVK).

It belongs to the calponin family. As to quaternary structure, monomer. Interacts with F-actin. Interacts with myosin. Expressed in the body wall muscles. Isoform a: Expression in the pharynx, anal depressor muscle, uterine muscle, vulva and unidentified neurons in the head and the ventral region. Isoform b: Expression in the body wall muscles, spermatheca, vulva and in the myoepithelial sheath.

The protein resides in the cytoplasm. It localises to the myofibril. The protein localises to the sarcomere. Its subcellular location is the i band. Its function is as follows. Thin filament-associated protein that is implicated in actin bundling and actin filament dynamics. Exhibits F-actin cross-linking activity. Required for the maintenance of sarcomeric actin organization in striated muscles. Competes with unc-60 isoform b for actin binding and protects actin filaments from depolymerization by unc-60, thereby contributing to actin filament stability. Cooperates with myosin to form actomyosin bundles and inhibits actomyosin ATPase activity and actomyosin motility. Might protect the myofilaments from mechanical stress. Functionally, acts as a negative regulator of myosin-dependent contractility of smooth muscle-like cells in the somatic gonad. The polypeptide is Protein unc-87 (unc-87) (Caenorhabditis elegans).